The chain runs to 300 residues: uncharacterized protein (300 aa).

The Proton acceptor role is filled by histidine 274.

The protein belongs to the AB hydrolase superfamily. As to quaternary structure, monomer.

It catalyses the reaction a carboxylic ester + H2O = an alcohol + a carboxylate + H(+). This is an uncharacterized protein from Bacillus subtilis (strain 168).